A 640-amino-acid polypeptide reads, in one-letter code: Chaperone protein HtpG (640 aa).

The segment at 1 to 348 (MAQYKFETEV…SEDLPLNVSR (348 aa)) is a; substrate-binding. Residues 349–565 (EILQQNRILS…ETDPSLQMER (217 aa)) form a b region. A c region spans residues 566 to 640 (MMRAMGQFNT…RLNRLMTNLK (75 aa)).

This sequence belongs to the heat shock protein 90 family. In terms of assembly, homodimer.

The protein localises to the cytoplasm. In terms of biological role, molecular chaperone. Has ATPase activity. This is Chaperone protein HtpG from Treponema denticola (strain ATCC 35405 / DSM 14222 / CIP 103919 / JCM 8153 / KCTC 15104).